The following is a 36-amino-acid chain: Photosystem II reaction center protein Y (36 aa).

Residues methionine 1–arginine 4 lie on the Lumenal side of the membrane. The chain crosses the membrane as a helical span at residues leucine 5–isoleucine 23. Residues glycine 24–serine 36 are Stromal-facing.

This sequence belongs to the PsbY family. In terms of assembly, PSII is composed of 1 copy each of membrane proteins PsbA, PsbB, PsbC, PsbD, PsbE, PsbF, PsbH, PsbI, PsbJ, PsbK, PsbL, PsbM, PsbT, PsbX, PsbY, PsbZ, Psb30/Ycf12, at least 3 peripheral proteins of the oxygen-evolving complex and a large number of cofactors. It forms dimeric complexes.

Its subcellular location is the plastid. It localises to the chloroplast thylakoid membrane. In terms of biological role, loosely associated component of the core of photosystem II (PSII), it is not always seen in crystals. PSII is a light-driven water plastoquinone oxidoreductase, using light energy to abstract electrons from H(2)O, generating a proton gradient subsequently used for ATP formation. This Pyropia yezoensis (Susabi-nori) protein is Photosystem II reaction center protein Y.